A 136-amino-acid polypeptide reads, in one-letter code: Large-conductance mechanosensitive channel (136 aa).

The next 2 helical transmembrane spans lie at 10 to 30 (FAMRGNVVDLAVGVIIGAAFG) and 76 to 96 (GVFIQNVFDFLIVAFAIFMAI).

The protein belongs to the MscL family. As to quaternary structure, homopentamer.

It is found in the cell inner membrane. Its function is as follows. Channel that opens in response to stretch forces in the membrane lipid bilayer. May participate in the regulation of osmotic pressure changes within the cell. This is Large-conductance mechanosensitive channel from Escherichia coli O127:H6 (strain E2348/69 / EPEC).